A 419-amino-acid chain; its full sequence is Tyrosine--tRNA ligase (419 aa).

Tyr-34 lines the L-tyrosine pocket. A 'HIGH' region motif is present at residues 39–48 (PSGDSMHIGH). L-tyrosine-binding residues include Tyr-168 and Gln-172. Residues 230-234 (KFGKS) carry the 'KMSKS' region motif. Residue Lys-233 participates in ATP binding. In terms of domain architecture, S4 RNA-binding spans 352-418 (ANLVDWLVTL…GKKKYFLVSY (67 aa)).

This sequence belongs to the class-I aminoacyl-tRNA synthetase family. TyrS type 1 subfamily. In terms of assembly, homodimer.

It is found in the cytoplasm. It carries out the reaction tRNA(Tyr) + L-tyrosine + ATP = L-tyrosyl-tRNA(Tyr) + AMP + diphosphate + H(+). Functionally, catalyzes the attachment of tyrosine to tRNA(Tyr) in a two-step reaction: tyrosine is first activated by ATP to form Tyr-AMP and then transferred to the acceptor end of tRNA(Tyr). In Listeria monocytogenes serotype 4a (strain HCC23), this protein is Tyrosine--tRNA ligase.